A 109-amino-acid chain; its full sequence is Putative gametogenetin-binding protein 1 (109 aa).

The tract at residues 24-109 (KAFRSTDTVG…KGEMGNWPPE (86 aa)) is interaction with GGN.

As to quaternary structure, interacts with CCDC159. Interacts with GGN.

The protein localises to the cytoplasm. Its subcellular location is the membrane. It is found in the golgi apparatus. May be involved in spermatogenesis. The protein is Putative gametogenetin-binding protein 1 (GGNBP1) of Homo sapiens (Human).